Consider the following 701-residue polypeptide: Glycine--tRNA ligase beta subunit (701 aa).

Belongs to the class-II aminoacyl-tRNA synthetase family. In terms of assembly, tetramer of two alpha and two beta subunits.

The protein localises to the cytoplasm. It carries out the reaction tRNA(Gly) + glycine + ATP = glycyl-tRNA(Gly) + AMP + diphosphate. The polypeptide is Glycine--tRNA ligase beta subunit (Anaeromyxobacter sp. (strain K)).